The primary structure comprises 333 residues: Glyoxylate reductase (333 aa).

NADP(+)-binding positions include 158–161 (FGRI), 180–182 (SRS), and 239–241 (IAR). Residues R241 and E270 contribute to the active site. H288 serves as the catalytic Proton donor. 288–290 (HIG) contacts NADP(+).

This sequence belongs to the D-isomer specific 2-hydroxyacid dehydrogenase family. GyaR subfamily. Homodimer.

It is found in the cytoplasm. It carries out the reaction glycolate + NAD(+) = glyoxylate + NADH + H(+). This is Glyoxylate reductase from Thermococcus kodakarensis (strain ATCC BAA-918 / JCM 12380 / KOD1) (Pyrococcus kodakaraensis (strain KOD1)).